Here is a 303-residue protein sequence, read N- to C-terminus: Probable 5-dehydro-4-deoxyglucarate dehydratase (303 aa).

This sequence belongs to the DapA family.

It carries out the reaction 5-dehydro-4-deoxy-D-glucarate + H(+) = 2,5-dioxopentanoate + CO2 + H2O. It functions in the pathway carbohydrate acid metabolism; D-glucarate degradation; 2,5-dioxopentanoate from D-glucarate: step 2/2. The chain is Probable 5-dehydro-4-deoxyglucarate dehydratase from Ectopseudomonas mendocina (strain ymp) (Pseudomonas mendocina).